We begin with the raw amino-acid sequence, 162 residues long: MSDRRPDRGRHQARKRAVDLLFEAEARGLTAAEVATSRNKLAGTQPDVTALNPYTVTVARGVTDHRDHIDDLISAHLQGWTLDRLPAVDRAILRVAVWELLHAEDVPEPVAVDEAVELAKQLSTDDSPGFVNGVLGQVMLVTPQIRAASQAVRESAQGPSEG.

It belongs to the NusB family.

Involved in transcription antitermination. Required for transcription of ribosomal RNA (rRNA) genes. Binds specifically to the boxA antiterminator sequence of the ribosomal RNA (rrn) operons. The polypeptide is Transcription antitermination protein NusB (Mycobacterium sp. (strain JLS)).